The chain runs to 408 residues: Tryptophan synthase beta chain (408 aa).

Lys-90 is modified (N6-(pyridoxal phosphate)lysine).

The protein belongs to the TrpB family. In terms of assembly, tetramer of two alpha and two beta chains. It depends on pyridoxal 5'-phosphate as a cofactor.

The catalysed reaction is (1S,2R)-1-C-(indol-3-yl)glycerol 3-phosphate + L-serine = D-glyceraldehyde 3-phosphate + L-tryptophan + H2O. Its pathway is amino-acid biosynthesis; L-tryptophan biosynthesis; L-tryptophan from chorismate: step 5/5. The beta subunit is responsible for the synthesis of L-tryptophan from indole and L-serine. The chain is Tryptophan synthase beta chain from Bacillus licheniformis (strain ATCC 14580 / DSM 13 / JCM 2505 / CCUG 7422 / NBRC 12200 / NCIMB 9375 / NCTC 10341 / NRRL NRS-1264 / Gibson 46).